A 272-amino-acid polypeptide reads, in one-letter code: Glutamate racemase (272 aa).

Substrate contacts are provided by residues 10-11 (DS) and 42-43 (YG). Catalysis depends on Cys73, which acts as the Proton donor/acceptor. Residue 74–75 (NT) participates in substrate binding. Residue Cys183 is the Proton donor/acceptor of the active site. Residue 184–185 (TH) participates in substrate binding.

It belongs to the aspartate/glutamate racemases family.

The catalysed reaction is L-glutamate = D-glutamate. Its pathway is cell wall biogenesis; peptidoglycan biosynthesis. Functionally, provides the (R)-glutamate required for cell wall biosynthesis. In Leifsonia xyli subsp. xyli (strain CTCB07), this protein is Glutamate racemase.